The chain runs to 228 residues: UPF0173 metal-dependent hydrolase BLi03080/BL00413 (228 aa).

This sequence belongs to the UPF0173 family.

The polypeptide is UPF0173 metal-dependent hydrolase BLi03080/BL00413 (Bacillus licheniformis (strain ATCC 14580 / DSM 13 / JCM 2505 / CCUG 7422 / NBRC 12200 / NCIMB 9375 / NCTC 10341 / NRRL NRS-1264 / Gibson 46)).